The sequence spans 282 residues: Acetyl-coenzyme A carboxylase carboxyl transferase subunit beta (282 aa).

Positions 28–282 constitute a CoA carboxyltransferase N-terminal domain; it reads IMTKCPSCRT…TKILDIHHVS (255 aa). Residues C32, C35, C51, and C54 each contribute to the Zn(2+) site. A C4-type zinc finger spans residues 32 to 54; that stretch reads CPSCRTIMYTKELKKNLYVCDSC.

Belongs to the AccD/PCCB family. Acetyl-CoA carboxylase is a heterohexamer composed of biotin carboxyl carrier protein (AccB), biotin carboxylase (AccC) and two subunits each of ACCase subunit alpha (AccA) and ACCase subunit beta (AccD). Requires Zn(2+) as cofactor.

The protein resides in the cytoplasm. The catalysed reaction is N(6)-carboxybiotinyl-L-lysyl-[protein] + acetyl-CoA = N(6)-biotinyl-L-lysyl-[protein] + malonyl-CoA. Its pathway is lipid metabolism; malonyl-CoA biosynthesis; malonyl-CoA from acetyl-CoA: step 1/1. Its function is as follows. Component of the acetyl coenzyme A carboxylase (ACC) complex. Biotin carboxylase (BC) catalyzes the carboxylation of biotin on its carrier protein (BCCP) and then the CO(2) group is transferred by the transcarboxylase to acetyl-CoA to form malonyl-CoA. The polypeptide is Acetyl-coenzyme A carboxylase carboxyl transferase subunit beta (Halalkalibacterium halodurans (strain ATCC BAA-125 / DSM 18197 / FERM 7344 / JCM 9153 / C-125) (Bacillus halodurans)).